A 155-amino-acid chain; its full sequence is MNPIRKKRLYWILALLCGVSIAMALALSALQENINLFYTPSQIVAGEAPQGTRIRAGGMVENGSLMRTQDSLALRFSVTDGAHNITVRYQGILPDLFREGQGIVAMGKLDRNGSLIADEVLAKHDENYMPPEVIHALKQAGVLDNPKRVKQESTR.

The Cytoplasmic segment spans residues 1–8 (MNPIRKKR). The helical; Signal-anchor for type II membrane protein transmembrane segment at 9 to 29 (LYWILALLCGVSIAMALALSA) threads the bilayer. The Periplasmic portion of the chain corresponds to 30-155 (LQENINLFYT…PKRVKQESTR (126 aa)). His124 and Tyr128 together coordinate heme.

The protein belongs to the CcmE/CycJ family.

The protein resides in the cell inner membrane. Heme chaperone required for the biogenesis of c-type cytochromes. Transiently binds heme delivered by CcmC and transfers the heme to apo-cytochromes in a process facilitated by CcmF and CcmH. The chain is Cytochrome c-type biogenesis protein CcmE from Janthinobacterium sp. (strain Marseille) (Minibacterium massiliensis).